Here is an 86-residue protein sequence, read N- to C-terminus: uncharacterized protein (86 aa).

A disordered region spans residues 1–21 (MLSNSTSRNRHSKHNKKNTRE). The segment covering 8 to 17 (RNRHSKHNKK) has biased composition (basic residues).

This is an uncharacterized protein from Acidianus convivator (ATV).